The chain runs to 132 residues: Replication enhancer protein (132 aa).

Belongs to the geminiviridae replication enhancer protein family. In terms of assembly, homooligomer. Interacts with the replication-associated protein (REP). Interacts with host proliferating cell nuclear antigen (PCNA). Interacts with host retinoblastoma-related protein 1 (RBR1), and may thereby deregulate the host cell cycle. Oligomerization and interaction with PCNA are necessary for optimal replication enhancement.

Increases viral DNA accumulation. Enhances infectivity and symptom expression. This Cabbage leaf curl virus (isolate Jamaica) (CaLCuV) protein is Replication enhancer protein.